The sequence spans 167 residues: Small ribosomal subunit protein uS5 (167 aa).

The region spanning 12–75 is the S5 DRBM domain; sequence LNEKLIAVNR…EKARRNIRDV (64 aa).

It belongs to the universal ribosomal protein uS5 family. Part of the 30S ribosomal subunit. Contacts proteins S4 and S8.

In terms of biological role, with S4 and S12 plays an important role in translational accuracy. Located at the back of the 30S subunit body where it stabilizes the conformation of the head with respect to the body. In Psychromonas ingrahamii (strain DSM 17664 / CCUG 51855 / 37), this protein is Small ribosomal subunit protein uS5.